The following is a 465-amino-acid chain: ATP synthase subunit beta (465 aa).

Position 153 to 160 (153 to 160 (GGAGVGKT)) interacts with ATP.

Belongs to the ATPase alpha/beta chains family. As to quaternary structure, F-type ATPases have 2 components, CF(1) - the catalytic core - and CF(0) - the membrane proton channel. CF(1) has five subunits: alpha(3), beta(3), gamma(1), delta(1), epsilon(1). CF(0) has three main subunits: a(1), b(2) and c(9-12). The alpha and beta chains form an alternating ring which encloses part of the gamma chain. CF(1) is attached to CF(0) by a central stalk formed by the gamma and epsilon chains, while a peripheral stalk is formed by the delta and b chains.

Its subcellular location is the cell membrane. It carries out the reaction ATP + H2O + 4 H(+)(in) = ADP + phosphate + 5 H(+)(out). Functionally, produces ATP from ADP in the presence of a proton gradient across the membrane. The catalytic sites are hosted primarily by the beta subunits. This chain is ATP synthase subunit beta, found in Clostridium perfringens (strain ATCC 13124 / DSM 756 / JCM 1290 / NCIMB 6125 / NCTC 8237 / Type A).